We begin with the raw amino-acid sequence, 343 residues long: Endoplasmic reticulum-resident calcium binding protein (343 aa).

Residues 1 to 26 form the signal peptide; that stretch reads MMKINLYKLLCFICVIFLLHKNVVRS. EF-hand domains lie at 59-94, 95-130, 135-170, 172-207, and 210-245; these read GAKERIEKLFHLIDKNNDKEITEEELNTWSSFLKNE, IFLKQVQAEMGQIDSDKDGFISLNELNDAFAQNLDA, KHSEGLLKRFQIVDKDKDGKLSINEVGLLIDPMKDE, LKELEINEILEHHDVNKDGKISLDEFKQTRSDESSG, and KDDEMALDDFNFFDANKDGFIDKEEIIKVYFDPAHE. Ca(2+) contacts are provided by aspartate 72, asparagine 74, aspartate 76, glutamate 78, glutamate 83, aspartate 108, aspartate 110, aspartate 112, glutamate 119, aspartate 148, aspartate 150, aspartate 152, lysine 154, glutamate 159, aspartate 185, asparagine 187, aspartate 189, lysine 191, glutamate 196, aspartate 223, asparagine 225, aspartate 227, and glutamate 234. Residues 313-331 show a composition bias toward acidic residues; the sequence is EDDDMDADNTEDDKDEADD. A disordered region spans residues 313–343; it reads EDDDMDADNTEDDKDEADDASQQKSPAIDEL.

Belongs to the CREC family.

It localises to the endoplasmic reticulum. In terms of biological role, calcium-binding protein. Required for schizont to ring transition. Required for the breakdown of the parasitophorous vacuole membrane during egress. Required for the proteolytic maturation of apical membrane antigen 1 (AMA-1) during egress. Required for the proteolytic maturation of subtilisin-like protease 1 (SUB1) during egress. Required for the proteolytic maturation of plasmepsin X (PMX) during egress. In Plasmodium falciparum (isolate 3D7), this protein is Endoplasmic reticulum-resident calcium binding protein.